A 362-amino-acid polypeptide reads, in one-letter code: Myricetin 3'/5'-O-methyltransferase 1 (362 aa).

Asp229 serves as a coordination point for S-adenosyl-L-methionine. His267 functions as the Proton acceptor in the catalytic mechanism.

The protein belongs to the class I-like SAM-binding methyltransferase superfamily. Cation-independent O-methyltransferase family. As to quaternary structure, homodimer. In terms of tissue distribution, mainly expressed in leaves secreting glandular trichomes types 1 and 4 and, to a lesser extent, in storage trichomes type 6.

The catalysed reaction is myricetin + S-adenosyl-L-methionine = laricitrin + S-adenosyl-L-homocysteine + H(+). The enzyme catalyses laricitrin + S-adenosyl-L-methionine = syringetin + S-adenosyl-L-homocysteine + H(+). It catalyses the reaction a 3'-hydroxyflavone + S-adenosyl-L-methionine = a 3'-methoxyflavone + S-adenosyl-L-homocysteine + H(+). It carries out the reaction a 5'-hydroxy-3'-methoxyflavone + S-adenosyl-L-methionine = a 3',5'-dimethoxyflavone + S-adenosyl-L-homocysteine + H(+). The catalysed reaction is quercetin + S-adenosyl-L-methionine = isorhamnetin + S-adenosyl-L-homocysteine + H(+). The enzyme catalyses rhamnetin + S-adenosyl-L-methionine = rhamnacene + S-adenosyl-L-homocysteine + H(+). It catalyses the reaction 3',4',5,7-tetrahydroxy-3-methoxyflavone + S-adenosyl-L-methionine = 3,3'-O-dimethylquercetin + S-adenosyl-L-homocysteine + H(+). The protein operates within flavonoid metabolism. Functionally, flavonoid 3'/5'-O-methyltransferase involved in the biosynthesis of polymethoxylated flavonoids natural products such as myricetin derivatives, aroma compounds possessing antioxidant properties and exhibiting pharmacological activities such as anti-carcinogen, anti-viral, anti-thrombotic, anti-diabetic, anti-atherosclerotic, and anti-inflammatory effects. Catalyzes S-adenosylmethionine-dependent regioselective 3'/5'-O-methylation of flavonoids; active on various hydroxylated flavonoid substrates, including myricetin and quercetin, but inactive toward kaempferol. Mediates the formation of 3'-methyl derivatives from quercetin, myricetin, 3-methyl quercetin and 7-methyl quercetin (rhamnetin), producing 3'-methyl quercetin (isorhamnetin), 3'-methyl myricetin (laricitrin), 3,3'-dimethyl quercetin (3-O-methylisorhamnetin) and 7,3'-dimethyl quercetin (7-O-methylisorhamnetin), respectively. Triggers the 5'-O-methylation of 3'-methyl myricetin (laricitrin), thus leading to production of 3',5'-dimethyl myricetin (syringetin). This is Myricetin 3'/5'-O-methyltransferase 1 from Solanum habrochaites (Wild tomato).